Reading from the N-terminus, the 275-residue chain is Ribosomal RNA small subunit methyltransferase A (275 aa).

6 residues coordinate S-adenosyl-L-methionine: asparagine 28, leucine 30, glycine 55, glutamate 77, aspartate 103, and asparagine 123.

Belongs to the class I-like SAM-binding methyltransferase superfamily. rRNA adenine N(6)-methyltransferase family. RsmA subfamily.

Its subcellular location is the cytoplasm. It catalyses the reaction adenosine(1518)/adenosine(1519) in 16S rRNA + 4 S-adenosyl-L-methionine = N(6)-dimethyladenosine(1518)/N(6)-dimethyladenosine(1519) in 16S rRNA + 4 S-adenosyl-L-homocysteine + 4 H(+). Functionally, specifically dimethylates two adjacent adenosines (A1518 and A1519) in the loop of a conserved hairpin near the 3'-end of 16S rRNA in the 30S particle. May play a critical role in biogenesis of 30S subunits. The sequence is that of Ribosomal RNA small subunit methyltransferase A from Rhizobium etli (strain ATCC 51251 / DSM 11541 / JCM 21823 / NBRC 15573 / CFN 42).